The primary structure comprises 376 residues: 1-deoxy-D-xylulose 5-phosphate reductoisomerase (376 aa).

The NADPH site is built by Ser10, Gly11, Ser12, Val13, Gly36, Lys37, Asn38, and Asn118. Lys119 lines the 1-deoxy-D-xylulose 5-phosphate pocket. Glu120 lines the NADPH pocket. Asp144 contributes to the Mn(2+) binding site. 1-deoxy-D-xylulose 5-phosphate is bound by residues Ser145, Glu146, Ser170, and His193. Glu146 is a binding site for Mn(2+). Gly199 contributes to the NADPH binding site. Residues Ser206, Asn211, Lys212, and Glu215 each coordinate 1-deoxy-D-xylulose 5-phosphate. Glu215 serves as a coordination point for Mn(2+).

Belongs to the DXR family. Requires Mg(2+) as cofactor. It depends on Mn(2+) as a cofactor.

It catalyses the reaction 2-C-methyl-D-erythritol 4-phosphate + NADP(+) = 1-deoxy-D-xylulose 5-phosphate + NADPH + H(+). It functions in the pathway isoprenoid biosynthesis; isopentenyl diphosphate biosynthesis via DXP pathway; isopentenyl diphosphate from 1-deoxy-D-xylulose 5-phosphate: step 1/6. Functionally, catalyzes the NADPH-dependent rearrangement and reduction of 1-deoxy-D-xylulose-5-phosphate (DXP) to 2-C-methyl-D-erythritol 4-phosphate (MEP). The chain is 1-deoxy-D-xylulose 5-phosphate reductoisomerase from Macrococcus caseolyticus (strain JCSC5402) (Macrococcoides caseolyticum).